A 208-amino-acid chain; its full sequence is Fibroblast growth factor-binding protein 2 (208 aa).

The first 19 residues, 1-19 (MKRVALLFLVVICGMGGLG), serve as a signal peptide directing secretion. 3 cysteine pairs are disulfide-bonded: C43–C59, C68–C102, and C77–C113. Residues 130–181 (EPEDGANRDKSSQKTSASVRGAGKSSVKKTGKPAVLPRIKPTQHGQGSENET) are disordered. An intrachain disulfide couples C191 to C199.

This sequence belongs to the fibroblast growth factor-binding protein family.

It localises to the secreted. Its subcellular location is the extracellular space. The sequence is that of Fibroblast growth factor-binding protein 2 (FGFBP2) from Gallus gallus (Chicken).